The following is a 377-amino-acid chain: Chaperone protein DnaJ (377 aa).

Residues 5-69 (DYYEVLGISK…QKRAQYDQYG (65 aa)) enclose the J domain. The CR-type zinc finger occupies 134–216 (GKDAEIEIPR…CHGKGRVTKT (83 aa)). The Zn(2+) site is built by cysteine 147, cysteine 150, cysteine 164, cysteine 167, cysteine 190, cysteine 193, cysteine 204, and cysteine 207. 4 CXXCXGXG motif repeats span residues 147 to 154 (CDTCHGSG), 164 to 171 (CSHCGGKG), 190 to 197 (CQYCNGTG), and 204 to 211 (CPTCHGKG).

Belongs to the DnaJ family. Homodimer. It depends on Zn(2+) as a cofactor.

It localises to the cytoplasm. Functionally, participates actively in the response to hyperosmotic and heat shock by preventing the aggregation of stress-denatured proteins and by disaggregating proteins, also in an autonomous, DnaK-independent fashion. Unfolded proteins bind initially to DnaJ; upon interaction with the DnaJ-bound protein, DnaK hydrolyzes its bound ATP, resulting in the formation of a stable complex. GrpE releases ADP from DnaK; ATP binding to DnaK triggers the release of the substrate protein, thus completing the reaction cycle. Several rounds of ATP-dependent interactions between DnaJ, DnaK and GrpE are required for fully efficient folding. Also involved, together with DnaK and GrpE, in the DNA replication of plasmids through activation of initiation proteins. The chain is Chaperone protein DnaJ from Listeria monocytogenes serotype 1/2a (strain 10403S).